Consider the following 479-residue polypeptide: MFS-type transporter lnaF (479 aa).

11 helical membrane-spanning segments follow: residues 47-67 (WIYLVALALFEIGSLVCGFTP), 71-91 (GLIIGRAITGLGSAGLFSGAI), 104-124 (LLCISVIMCLFGVADVAGPLI), 136-156 (WCFYINLPFGGLTALAIVFLL), 177-197 (LVGLLFLFPAVICLLLVLSWG), 208-228 (IIGLIVGFTALILVFIVVQWW), 250-270 (IFSFCITGAMMAFTYHLPIWF), 283-303 (LMSIPTILGMTICSLLSAVLV), 306-326 (IGFYTPFMYAAPVLSVIGAGL), 344-364 (IPFGIGLGIGLSQPMVVVQAV), and 372-392 (LAIAITAFMESLGGSVAISVA). A glycan (N-linked (GlcNAc...) asparagine) is linked at Asn416. A helical transmembrane segment spans residues 442-462 (LAITQALYVGVALSSLAIVGA).

It belongs to the major facilitator superfamily. TCR/Tet family.

The protein localises to the cell membrane. In terms of biological role, MFS-type transporter; part of the lnb gene cluster that mediates the biosynthesis of diastereomeric piperazines. Lna and lnb clusters encode sets of enzymes that produce overlapping sets of previously undescribed metabolites such as piperazinomycin-like metabolites or morpholine. The lna and lnb biosynthetic pathways appear to be part of a signaling network that controls the formation of sclerotia, a resilient overwintering structure. May be involved in the secretion of the metabolites produced by the lna and lnb clusters. The sequence is that of MFS-type transporter lnaF from Aspergillus flavus (strain ATCC 200026 / FGSC A1120 / IAM 13836 / NRRL 3357 / JCM 12722 / SRRC 167).